A 171-amino-acid polypeptide reads, in one-letter code: Adenine phosphoribosyltransferase (171 aa).

The protein belongs to the purine/pyrimidine phosphoribosyltransferase family. Homodimer.

It is found in the cytoplasm. The catalysed reaction is AMP + diphosphate = 5-phospho-alpha-D-ribose 1-diphosphate + adenine. Its pathway is purine metabolism; AMP biosynthesis via salvage pathway; AMP from adenine: step 1/1. Its function is as follows. Catalyzes a salvage reaction resulting in the formation of AMP, that is energically less costly than de novo synthesis. The protein is Adenine phosphoribosyltransferase of Solidesulfovibrio magneticus (strain ATCC 700980 / DSM 13731 / RS-1) (Desulfovibrio magneticus).